The following is a 364-amino-acid chain: Guanine nucleotide-binding protein alpha-6 subunit (364 aa).

The interval 1–29 is disordered; the sequence is MGAGATGLRGARLSPEERANSSKSRAIDR. The N-myristoyl glycine moiety is linked to residue Gly-2. Basic and acidic residues predominate over residues 14 to 29; sequence SPEERANSSKSRAIDR. The 324-residue stretch at 40-363 folds into the G-alpha domain; it reads NRFKILLLGT…NENLRSAGLH (324 aa). The interval 43 to 56 is G1 motif; it reads KILLLGTAESGKST. GTP-binding positions include 48–55, 186–192, 211–215, 280–283, and Ala-335; these read GTAESGKS, VHCRIST, DVGGQ, and NKYD. Mg(2+)-binding residues include Ser-55 and Thr-192. The interval 184-192 is G2 motif; sequence DIVHCRIST. The interval 207–216 is G3 motif; the sequence is FKMVDVGGQR. The segment at 276–283 is G4 motif; sequence VLFLNKYD. Residues 333–338 are G5 motif; it reads TTATDT.

This sequence belongs to the G-alpha family. G proteins are composed of 3 units; alpha, beta and gamma. The alpha chain contains the guanine nucleotide binding site.

Guanine nucleotide-binding proteins (G proteins) are involved as modulators or transducers in various transmembrane signaling systems. This is Guanine nucleotide-binding protein alpha-6 subunit (gpa-6) from Caenorhabditis elegans.